The primary structure comprises 471 residues: V-type ATP synthase beta chain (471 aa).

This sequence belongs to the ATPase alpha/beta chains family.

Its function is as follows. Produces ATP from ADP in the presence of a proton gradient across the membrane. The V-type beta chain is a regulatory subunit. The protein is V-type ATP synthase beta chain of Streptococcus pyogenes serotype M12 (strain MGAS2096).